The primary structure comprises 728 residues: Cellulose synthase-like protein E6 (728 aa).

The next 2 helical transmembrane spans lie at 21–43 (AVYR…YRAT) and 53–73 (AAWL…VITQ). Active-site residues include Asp-141 and Asp-446. 5 consecutive transmembrane segments (helical) span residues 523-543 (LWAA…LGLV), 546-566 (TPLF…VFCV), 646-666 (PEFV…VAGL), 669-689 (IMAG…LIVI), and 707-727 (IPLP…LLPI).

The protein belongs to the glycosyltransferase 2 family. Plant cellulose synthase-like E subfamily.

The protein localises to the golgi apparatus membrane. Thought to be a Golgi-localized beta-glycan synthase that polymerize the backbones of noncellulosic polysaccharides (hemicelluloses) of plant cell wall. The protein is Cellulose synthase-like protein E6 (CSLE6) of Oryza sativa subsp. japonica (Rice).